The following is an 87-amino-acid chain: U3-theraphotoxin-Hhn1a 12 (87 aa).

The first 24 residues, 1–24 (MVNMKASMFLTFAGLVLLFVVCYA), serve as a signal peptide directing secretion. Residues 25–52 (SESEEKEFPKEMLSSIFAVDKDFKQEER) constitute a propeptide that is removed on maturation. 3 disulfides stabilise this stretch: Cys-54/Cys-67, Cys-61/Cys-72, and Cys-66/Cys-79.

Belongs to the neurotoxin 10 (Hwtx-1) family. 51 (Hntx-8) subfamily. Hntx-8 sub-subfamily. Expressed by the venom gland.

The protein localises to the secreted. Functionally, ion channel inhibitor. This is U3-theraphotoxin-Hhn1a 12 from Cyriopagopus hainanus (Chinese bird spider).